Here is a 132-residue protein sequence, read N- to C-terminus: Small ribosomal subunit protein eS24 (132 aa).

The span at 90–100 (RLAKHGLYEKK) shows a compositional bias: basic and acidic residues. Residues 90 to 132 (RLAKHGLYEKKKTSRKQRKERKNRMKKVRGTAKANVGAGKKKD) are disordered. The span at 101–119 (KTSRKQRKERKNRMKKVRG) shows a compositional bias: basic residues.

Belongs to the eukaryotic ribosomal protein eS24 family. Component of the small ribosomal subunit. Part of the small subunit (SSU) processome, composed of more than 70 proteins and the RNA chaperone small nucleolar RNA (snoRNA) U3.

The protein resides in the cytoplasm. Its subcellular location is the nucleus. The protein localises to the nucleolus. Functionally, component of the small ribosomal subunit. The ribosome is a large ribonucleoprotein complex responsible for the synthesis of proteins in the cell. Required for processing of pre-rRNA and maturation of 40S ribosomal subunits. Part of the small subunit (SSU) processome, first precursor of the small eukaryotic ribosomal subunit. During the assembly of the SSU processome in the nucleolus, many ribosome biogenesis factors, an RNA chaperone and ribosomal proteins associate with the nascent pre-rRNA and work in concert to generate RNA folding, modifications, rearrangements and cleavage as well as targeted degradation of pre-ribosomal RNA by the RNA exosome. This is Small ribosomal subunit protein eS24 (rps24) from Xenopus laevis (African clawed frog).